The chain runs to 375 residues: 23S rRNA (uracil(747)-C(5))-methyltransferase RlmC (375 aa).

[4Fe-4S] cluster-binding residues include Cys-3, Cys-11, Cys-14, and Cys-87. S-adenosyl-L-methionine is bound by residues Gln-212, Phe-241, Glu-262, and Asn-307. Cys-334 serves as the catalytic Nucleophile.

The protein belongs to the class I-like SAM-binding methyltransferase superfamily. RNA M5U methyltransferase family. RlmC subfamily.

It carries out the reaction uridine(747) in 23S rRNA + S-adenosyl-L-methionine = 5-methyluridine(747) in 23S rRNA + S-adenosyl-L-homocysteine + H(+). In terms of biological role, catalyzes the formation of 5-methyl-uridine at position 747 (m5U747) in 23S rRNA. This is 23S rRNA (uracil(747)-C(5))-methyltransferase RlmC from Escherichia fergusonii (strain ATCC 35469 / DSM 13698 / CCUG 18766 / IAM 14443 / JCM 21226 / LMG 7866 / NBRC 102419 / NCTC 12128 / CDC 0568-73).